A 111-amino-acid chain; its full sequence is BET1-like protein (111 aa).

Residues 1 to 86 are Cytoplasmic-facing; that stretch reads MADWARAQSP…MARSGRDNRK (86 aa). A phosphoserine mark is found at serine 9 and serine 37. Residues 15–77 form the t-SNARE coiled-coil homology domain; that stretch reads EILDRENKRM…TGSVKRFSTM (63 aa). A helical; Anchor for type IV membrane protein transmembrane segment spans residues 87–107; it reads LLCGMAVGLIVAFFILSYFLS. At 108 to 111 the chain is on the lumenal side; the sequence is RART.

Component of a SNARE complex consisting of STX5, YKT6, GOSR1 and BET1L. Interacts with STX5.

It localises to the golgi apparatus membrane. The protein localises to the golgi apparatus. Its subcellular location is the trans-Golgi network membrane. In terms of biological role, vesicle SNARE required for targeting and fusion of retrograde transport vesicles with the Golgi complex. Required for the integrity of the Golgi complex. The sequence is that of BET1-like protein from Pongo abelii (Sumatran orangutan).